The sequence spans 266 residues: Energy-coupling factor transporter ATP-binding protein EcfA1 (266 aa).

The 236-residue stretch at 2–237 folds into the ABC transporter domain; that stretch reads IKLNNVTFRY…EKIIEIAKIA (236 aa). An ATP-binding site is contributed by 37-44; sequence GHNGSGKS.

Belongs to the ABC transporter superfamily. Energy-coupling factor EcfA family. Forms a stable energy-coupling factor (ECF) transporter complex composed of 2 membrane-embedded substrate-binding proteins (S component), 2 ATP-binding proteins (A component) and 2 transmembrane proteins (T component).

It localises to the cell membrane. Functionally, ATP-binding (A) component of a common energy-coupling factor (ECF) ABC-transporter complex. Unlike classic ABC transporters this ECF transporter provides the energy necessary to transport a number of different substrates. This is Energy-coupling factor transporter ATP-binding protein EcfA1 from Mycoplasmopsis synoviae (strain 53) (Mycoplasma synoviae).